Reading from the N-terminus, the 219-residue chain is Uracil-DNA glycosylase (219 aa).

Asp61 (proton acceptor) is an active-site residue.

Belongs to the uracil-DNA glycosylase (UDG) superfamily. UNG family.

The protein localises to the cytoplasm. The catalysed reaction is Hydrolyzes single-stranded DNA or mismatched double-stranded DNA and polynucleotides, releasing free uracil.. In terms of biological role, excises uracil residues from the DNA which can arise as a result of misincorporation of dUMP residues by DNA polymerase or due to deamination of cytosine. This chain is Uracil-DNA glycosylase, found in Haemophilus influenzae (strain 86-028NP).